The sequence spans 9439 residues: Extracellular matrix-binding protein ebh (9439 aa).

FIVAR domains are found at residues 1815 to 1871 (ARRR…VNSA), 1901 to 1957 (AKEQ…INDA), 1985 to 2041 (AYDT…VRDA), 2071 to 2127 (AKKR…ITSE), 2155 to 2211 (AYNK…VTQA), 2241 to 2297 (AKNR…ISSE), 2325 to 2381 (AYNK…VEDA), 2411 to 2467 (AKEK…ITEN), 2488 to 2551 (DTTS…VNNA), 2581 to 2638 (ARNR…STEI), 2665 to 2720 (AKNQ…IRTN), 2748 to 2804 (AKTA…VSDE), 2832 to 2888 (AYNQ…VNNA), 2918 to 2974 (AKEQ…ISNA), 3002 to 3058 (AYNQ…VTAA), 3088 to 3144 (AKQQ…ITNE), 3172 to 3228 (AYNQ…VAQA), 3258 to 3314 (AKNQ…ISDE), 3335 to 3398 (DTTE…VNNA), 3428 to 3484 (ARLN…ITTE), 3512 to 3567 (AKTA…IKTN), 3595 to 3650 (IKRQ…VKES), 3678 to 3733 (AKNR…IRQN), 3802 to 3860 (SMTA…IDQK), 3928 to 3983 (AMTQ…LDPA), 4056 to 4114 (AMQA…VNQK), 4182 to 4240 (SMGT…VDNA), 4308 to 4365 (AMHT…INQK), 4433 to 4491 (VMEQ…IEQA), and 4559 to 4617 (SMQT…IDQT). Positions 2495–2507 (EVRKLSRRGDTNN) are enriched in basic and acidic residues. The segment at 2495-2514 (EVRKLSRRGDTNNKKPSSVS) is disordered. Polar residues predominate over residues 2925-2938 (AVDQVPSTEGMTQQ). The interval 2925–2951 (AVDQVPSTEGMTQQTKDDYNSKQQAAQ) is disordered. A disordered region spans residues 4649 to 4674 (GYLNDPQKSGEESLVNGSNTRSEVEE). FIVAR domains follow at residues 4685 to 4743 (AMKQ…IEQK), 4811 to 4869 (AMQA…IEQA), 4937 to 4995 (AMSN…IEQA), 5063 to 5115 (AMEA…VLDK), 5189 to 5246 (AMLG…INQL), 5314 to 5372 (LMGA…VTTA), 5440 to 5498 (AMGE…IDQA), 5566 to 5624 (AMKK…ITNA), 5692 to 5750 (AMKQ…IADT), 5818 to 5875 (DMST…LQDL), 5943 to 6000 (AMKA…IKQA), 6068 to 6126 (KMEE…INRT), 6194 to 6252 (AMQQ…IQAI), and 6320 to 6378 (EMGT…IADA). Residues 5699-5712 (QVNQDDQISNSSPF) are compositionally biased toward polar residues. The tract at residues 5699 to 5719 (QVNQDDQISNSSPFINEDSDK) is disordered. Positions 6413–6434 (NNSQRQSEHDEINSAPSRTEVS) are disordered. FIVAR domains are found at residues 6446–6504 (AMRQ…IEDA), 6572–6630 (AMKA…INRA), 6698–6755 (SMNQ…IDQA), 6823–6877 (TMKA…ANDE), 6949–7007 (AMKK…INTI), 7075–7133 (SMNT…VERA), 7201–7259 (DMKK…IENA), 7327–7384 (AMKH…IKQL), 7452–7510 (AMEN…IEHA), 7578–7636 (AMKA…INSI), 7704–7762 (AMET…VDIV), 7830–7888 (AMKS…VRQA), 7956–8010 (VMGK…TKQA), 8078–8137 (IMGE…IDTF), 8205–8264 (AMKS…IQGL), 8332–8391 (AMKD…VLGL), 8459–8518 (KMKL…IQHL), and 8587–8643 (AMQG…ANII). The helical transmembrane segment at 9306–9324 (TVGVITLTGLLSSFWLVLA) threads the bilayer. 3 stretches are compositionally biased toward basic and acidic residues: residues 9363–9375 (DKEEQIQNDDKHS), 9386–9395 (EKQLSEEDIH), and 9404–9413 (QNSDNKDTKQ). A disordered region spans residues 9363–9439 (DKEEQIQNDD…VVKTKKRSKK (77 aa)). Positions 9414-9439 (KKVTSKKKKTPQSTKKVVKTKKRSKK) are enriched in basic residues.

The protein localises to the cell membrane. The polypeptide is Extracellular matrix-binding protein ebh (ebh) (Staphylococcus epidermidis (strain ATCC 12228 / FDA PCI 1200)).